A 356-amino-acid polypeptide reads, in one-letter code: Vesicular integral-membrane protein VIP36 (356 aa).

The signal sequence occupies residues 1-44; that stretch reads MAAEGWIWRWGWGRRCLGRPGLPGPGPGPATPLFLLLLLGPVVA. The Lumenal segment spans residues 45–322; it reads DITDGNSEHL…FRSGPLTGWR (278 aa). An L-type lectin-like domain is found at 52 to 276; that stretch reads EHLKREHSLI…DIISMKLFQL (225 aa). Residues Ser-96 and Asp-131 each contribute to the a carbohydrate site. Ca(2+)-binding residues include Asp-162, Tyr-164, and Asn-166. 164–166 contributes to the a carbohydrate binding site; it reads YPN. N-linked (GlcNAc...) asparagine glycosylation is present at Asn-183. His-190 lines the a carbohydrate pocket. Asp-193 provides a ligand contact to Ca(2+). A disulfide bridge connects residues Cys-202 and Cys-239. 260–262 contacts a carbohydrate; that stretch reads GDL. A helical transmembrane segment spans residues 323–345; sequence VFLLLLCALLGIIVCAVVGAVVF. The Cytoplasmic segment spans residues 346-356; that stretch reads QKRQERNKRFY.

In terms of assembly, monomer. Ca(2+) serves as cofactor. As to expression, expressed in kidney, liver, intestine, lung, spleen and heart. Low expression in brain.

It localises to the golgi apparatus membrane. Its function is as follows. Plays a role as an intracellular lectin in the early secretory pathway. Interacts with N-acetyl-D-galactosamine and high-mannose type glycans and may also bind to O-linked glycans. Involved in the transport and sorting of glycoproteins carrying high mannose-type glycans. In Canis lupus familiaris (Dog), this protein is Vesicular integral-membrane protein VIP36 (LMAN2).